The chain runs to 195 residues: Thymidylate kinase (195 aa).

G7–S14 serves as a coordination point for ATP.

The protein belongs to the thymidylate kinase family.

It carries out the reaction dTMP + ATP = dTDP + ADP. Phosphorylation of dTMP to form dTDP in both de novo and salvage pathways of dTTP synthesis. This chain is Thymidylate kinase, found in Helicobacter hepaticus (strain ATCC 51449 / 3B1).